We begin with the raw amino-acid sequence, 345 residues long: Phosphoribosylformylglycinamidine cyclo-ligase (345 aa).

It belongs to the AIR synthase family.

It is found in the cytoplasm. The enzyme catalyses 2-formamido-N(1)-(5-O-phospho-beta-D-ribosyl)acetamidine + ATP = 5-amino-1-(5-phospho-beta-D-ribosyl)imidazole + ADP + phosphate + H(+). It participates in purine metabolism; IMP biosynthesis via de novo pathway; 5-amino-1-(5-phospho-D-ribosyl)imidazole from N(2)-formyl-N(1)-(5-phospho-D-ribosyl)glycinamide: step 2/2. The chain is Phosphoribosylformylglycinamidine cyclo-ligase from Shigella dysenteriae serotype 1 (strain Sd197).